We begin with the raw amino-acid sequence, 225 residues long: GTP cyclohydrolase III (225 aa).

It belongs to the archaeal-type GTP cyclohydrolase family.

It catalyses the reaction GTP + 3 H2O = 2-amino-5-formylamino-6-(5-phospho-D-ribosylamino)pyrimidin-4(3H)-one + 2 phosphate + 2 H(+). In terms of biological role, catalyzes the formation of 2-amino-5-formylamino-6-ribofuranosylamino-4(3H)-pyrimidinone ribonucleotide monophosphate and inorganic phosphate from GTP. Also has an independent pyrophosphate phosphohydrolase activity. This chain is GTP cyclohydrolase III, found in Sulfurisphaera tokodaii (strain DSM 16993 / JCM 10545 / NBRC 100140 / 7) (Sulfolobus tokodaii).